A 345-amino-acid chain; its full sequence is S-adenosylmethionine:tRNA ribosyltransferase-isomerase (345 aa).

This sequence belongs to the QueA family. Monomer.

The protein resides in the cytoplasm. The catalysed reaction is 7-aminomethyl-7-carbaguanosine(34) in tRNA + S-adenosyl-L-methionine = epoxyqueuosine(34) in tRNA + adenine + L-methionine + 2 H(+). It functions in the pathway tRNA modification; tRNA-queuosine biosynthesis. Functionally, transfers and isomerizes the ribose moiety from AdoMet to the 7-aminomethyl group of 7-deazaguanine (preQ1-tRNA) to give epoxyqueuosine (oQ-tRNA). This chain is S-adenosylmethionine:tRNA ribosyltransferase-isomerase, found in Helicobacter pylori (strain HPAG1).